Consider the following 137-residue polypeptide: Large-conductance mechanosensitive channel (137 aa).

2 helical membrane-spanning segments follow: residues 16-36 (VIDL…VDSI) and 83-103 (GNFI…FLMI).

This sequence belongs to the MscL family. As to quaternary structure, homopentamer.

The protein resides in the cell inner membrane. Channel that opens in response to stretch forces in the membrane lipid bilayer. May participate in the regulation of osmotic pressure changes within the cell. In Methylibium petroleiphilum (strain ATCC BAA-1232 / LMG 22953 / PM1), this protein is Large-conductance mechanosensitive channel.